We begin with the raw amino-acid sequence, 166 residues long: Signal peptidase complex catalytic subunit SEC11 (166 aa).

Topologically, residues 1–9 (MNIRQQLTQ) are cytoplasmic. A helical; Signal-anchor for type II membrane protein transmembrane segment spans residues 10–30 (LLTLGYVFASAFMLWKTLSVV). At 31 to 166 (ANLHSPIVVV…LGLSSLFSNE (136 aa)) the chain is on the lumenal side. Active-site charge relay system residues include Ser44, His83, and Asp108. The segment at 152 to 163 (GLLGLLGLSSLF) is C-terminal short (CTS) helix.

Belongs to the peptidase S26B family. As to quaternary structure, component of the signal peptidase complex (SPC) composed of a catalytic subunit SEC11 and three accessory subunits SPC1, SPC2 and SPC3. The complex induces a local thinning of the ER membrane which is used to measure the length of the signal peptide (SP) h-region of protein substrates. This ensures the selectivity of the complex towards h-regions shorter than 18-20 amino acids. SPC associates with the translocon complex.

It is found in the endoplasmic reticulum membrane. It catalyses the reaction Cleavage of hydrophobic, N-terminal signal or leader sequences from secreted and periplasmic proteins.. Catalytic component of the signal peptidase complex (SPC) which catalyzes the cleavage of N-terminal signal sequences from nascent proteins as they are translocated into the lumen of the endoplasmic reticulum. Specifically cleaves N-terminal signal peptides that contain a hydrophobic alpha-helix (h-region) shorter than 18-20 amino acids. This Lodderomyces elongisporus (strain ATCC 11503 / CBS 2605 / JCM 1781 / NBRC 1676 / NRRL YB-4239) (Yeast) protein is Signal peptidase complex catalytic subunit SEC11 (SEC11).